The primary structure comprises 392 residues: 1-deoxy-D-xylulose 5-phosphate reductoisomerase (392 aa).

NADPH-binding residues include Thr-10, Gly-11, Ser-12, Ile-13, Asn-38, and Asn-124. Lys-125 contributes to the 1-deoxy-D-xylulose 5-phosphate binding site. Residue Glu-126 coordinates NADPH. Asp-150 serves as a coordination point for Mn(2+). 1-deoxy-D-xylulose 5-phosphate contacts are provided by Ser-151, Glu-152, Ser-176, and His-199. Glu-152 provides a ligand contact to Mn(2+). Gly-205 serves as a coordination point for NADPH. 4 residues coordinate 1-deoxy-D-xylulose 5-phosphate: Ser-212, Asn-217, Lys-218, and Glu-221. Glu-221 serves as a coordination point for Mn(2+).

This sequence belongs to the DXR family. It depends on Mg(2+) as a cofactor. Mn(2+) is required as a cofactor.

The enzyme catalyses 2-C-methyl-D-erythritol 4-phosphate + NADP(+) = 1-deoxy-D-xylulose 5-phosphate + NADPH + H(+). Its pathway is isoprenoid biosynthesis; isopentenyl diphosphate biosynthesis via DXP pathway; isopentenyl diphosphate from 1-deoxy-D-xylulose 5-phosphate: step 1/6. Its function is as follows. Catalyzes the NADPH-dependent rearrangement and reduction of 1-deoxy-D-xylulose-5-phosphate (DXP) to 2-C-methyl-D-erythritol 4-phosphate (MEP). The sequence is that of 1-deoxy-D-xylulose 5-phosphate reductoisomerase from Synechococcus sp. (strain JA-2-3B'a(2-13)) (Cyanobacteria bacterium Yellowstone B-Prime).